Here is a 300-residue protein sequence, read N- to C-terminus: Haloalkane dehalogenase (300 aa).

Residues 32-155 (AIVFQHGNPT…PAVRGVFQGF (124 aa)) form the AB hydrolase-1 domain. Catalysis depends on aspartate 109, which acts as the Nucleophile. Glutamate 133 (proton donor) is an active-site residue. Histidine 273 acts as the Proton acceptor in catalysis.

The protein belongs to the haloalkane dehalogenase family. Type 2 subfamily. In terms of assembly, monomer.

The enzyme catalyses 1-haloalkane + H2O = a halide anion + a primary alcohol + H(+). Catalyzes hydrolytic cleavage of carbon-halogen bonds in halogenated aliphatic compounds, leading to the formation of the corresponding primary alcohols, halide ions and protons. This is Haloalkane dehalogenase from Mycobacterium tuberculosis (strain ATCC 25177 / H37Ra).